A 187-amino-acid polypeptide reads, in one-letter code: Ribosome-recycling factor (187 aa).

It belongs to the RRF family.

It localises to the cytoplasm. Its function is as follows. Responsible for the release of ribosomes from messenger RNA at the termination of protein biosynthesis. May increase the efficiency of translation by recycling ribosomes from one round of translation to another. This is Ribosome-recycling factor from Paracoccus zeaxanthinifaciens.